Consider the following 482-residue polypeptide: tRNA sulfurtransferase (482 aa).

One can recognise a THUMP domain in the interval 61–165; that stretch reads LAIRDALTRI…DDRLLLIKGR (105 aa). Residues 183–184, lysine 265, glycine 287, and glutamine 296 contribute to the ATP site; that span reads LI. A disulfide bond links cysteine 344 and cysteine 456. Residues 404–482 form the Rhodanese domain; it reads FGANDVILDI…GFANVKVYRP (79 aa). Cysteine 456 acts as the Cysteine persulfide intermediate in catalysis.

Belongs to the ThiI family.

It is found in the cytoplasm. It carries out the reaction [ThiI sulfur-carrier protein]-S-sulfanyl-L-cysteine + a uridine in tRNA + 2 reduced [2Fe-2S]-[ferredoxin] + ATP + H(+) = [ThiI sulfur-carrier protein]-L-cysteine + a 4-thiouridine in tRNA + 2 oxidized [2Fe-2S]-[ferredoxin] + AMP + diphosphate. The enzyme catalyses [ThiS sulfur-carrier protein]-C-terminal Gly-Gly-AMP + S-sulfanyl-L-cysteinyl-[cysteine desulfurase] + AH2 = [ThiS sulfur-carrier protein]-C-terminal-Gly-aminoethanethioate + L-cysteinyl-[cysteine desulfurase] + A + AMP + 2 H(+). It functions in the pathway cofactor biosynthesis; thiamine diphosphate biosynthesis. Catalyzes the ATP-dependent transfer of a sulfur to tRNA to produce 4-thiouridine in position 8 of tRNAs, which functions as a near-UV photosensor. Also catalyzes the transfer of sulfur to the sulfur carrier protein ThiS, forming ThiS-thiocarboxylate. This is a step in the synthesis of thiazole, in the thiamine biosynthesis pathway. The sulfur is donated as persulfide by IscS. This chain is tRNA sulfurtransferase, found in Salmonella agona (strain SL483).